Consider the following 786-residue polypeptide: LPS-assembly protein LptD (786 aa).

The first 24 residues, 1–24 (MKKRIPTLLATMIASALYSHQGLA), serve as a signal peptide directing secretion. Disulfide bonds link Cys31-Cys726 and Cys173-Cys727.

This sequence belongs to the LptD family. As to quaternary structure, component of the lipopolysaccharide transport and assembly complex. Interacts with LptE and LptA. Post-translationally, contains two intramolecular disulfide bonds.

It is found in the cell outer membrane. Together with LptE, is involved in the assembly of lipopolysaccharide (LPS) at the surface of the outer membrane. The protein is LPS-assembly protein LptD of Salmonella typhimurium (strain LT2 / SGSC1412 / ATCC 700720).